The chain runs to 694 residues: MARPVPIEKLRNIGIVAHIDAGKTTTTERILFYTGKTYKIGEVHEGAATMDWMEQEKERGITITSATTAAYWKGYQLNIIDTPGHVDFGVEVVRSMKALDGIVFVFSSVEAVQPQSEANWRWADKFGVPRIAFVNKMDRTGADFFKVYDDIIEKLGAKPVPIQVPIGSEENFEGIVDLFEMKAYIWRGDELGAKYDVTDDIPSDVLPVAEEWREKMIEAIVETDEELMEKYLEGEELSVEDLKKALRKATISRELVPMLCGSAFKNKGVQPLLDAVIDFLPSPVDVPPVKGVNPDTGEEEERHASDNEPFCALAFKVMADPYAGQLTYFRVYSGVIKAGDTILIANKNKKVRVGRILRMHANQREEITEVHAGDIAAAVGLDTVTGDTLSDPNHPIVLESMEFPEPVIAMAIEPKTKSDQEKLSQVLNKFMKEDPTFKVTVDPETNQTLIHGMGELHLEIMVDRMKREYGIEVNVGKPQVAYKETIKKKAVGEGKFIRQSGGRGQYGHAIIEIEPLAEKDYEFVDKIVGGVIPKEFIPAVDAGIQEAMQSGVVAGYPMIGVKATLFDGSFHEVDSSEIAFKIAGSMAFREAAKKANPVLLEPIMLVEVDTPEEYMGDVMGDLSKRRGKILGSEKKGTTMTIKAEVPLAEMFGYATDLRSLTQGRATFSMVFEKYEEVPKNIADEIAGAKAKAES.

One can recognise a tr-type G domain in the interval 8 to 284 (EKLRNIGIVA…AVIDFLPSPV (277 aa)). GTP-binding positions include 17-24 (AHIDAGKT), 81-85 (DTPGH), and 135-138 (NKMD).

Belongs to the TRAFAC class translation factor GTPase superfamily. Classic translation factor GTPase family. EF-G/EF-2 subfamily.

The protein localises to the cytoplasm. In terms of biological role, catalyzes the GTP-dependent ribosomal translocation step during translation elongation. During this step, the ribosome changes from the pre-translocational (PRE) to the post-translocational (POST) state as the newly formed A-site-bound peptidyl-tRNA and P-site-bound deacylated tRNA move to the P and E sites, respectively. Catalyzes the coordinated movement of the two tRNA molecules, the mRNA and conformational changes in the ribosome. The sequence is that of Elongation factor G from Persephonella marina (strain DSM 14350 / EX-H1).